The primary structure comprises 204 residues: Dihydroorotase (204 aa).

His-34 contributes to the Zn(2+) binding site. Leu-79 is a substrate binding site. Position 107 (Asp-107) interacts with Zn(2+). Asp-107 is an active-site residue. Residues His-111 and Ala-123 each contribute to the substrate site.

It belongs to the metallo-dependent hydrolases superfamily. DHOase family. Class II DHOase subfamily. In terms of assembly, homodimer. The cofactor is Zn(2+).

The catalysed reaction is (S)-dihydroorotate + H2O = N-carbamoyl-L-aspartate + H(+). It functions in the pathway pyrimidine metabolism; UMP biosynthesis via de novo pathway; (S)-dihydroorotate from bicarbonate: step 3/3. Functionally, catalyzes the reversible cyclization of carbamoyl aspartate to dihydroorotate. This is Dihydroorotase from Serratia marcescens.